Here is a 232-residue protein sequence, read N- to C-terminus: tRNA-uridine aminocarboxypropyltransferase (232 aa).

Zn(2+) contacts are provided by C31, C34, C41, and C43. The DXTW signature appears at 137-140; it reads DGTW.

This sequence belongs to the TDD superfamily. DTWD2 family. TapT subfamily. In terms of assembly, monomer in solution.

It catalyses the reaction a uridine in tRNA + S-adenosyl-L-methionine = a 3-[(3S)-3-amino-3-carboxypropyl]uridine in tRNA + S-methyl-5'-thioadenosine + H(+). The catalysed reaction is uridine(47) in tRNA(Phe) + S-adenosyl-L-methionine = 3-[(3S)-3-amino-3-carboxypropyl]uridine(47) in tRNA(Phe) + S-methyl-5'-thioadenosine + H(+). Its activity is regulated as follows. The degree of the acp3U modification at U47 is dependent on the presence of the m7G modification at the preceding nucleotide G46. It also depends on medium conditions. Functionally, catalyzes the formation of 3-(3-amino-3-carboxypropyl)uridine (acp3U) at position 47 of tRNAs. Acp3U47 confers thermal stability on tRNA. The polypeptide is tRNA-uridine aminocarboxypropyltransferase (Escherichia coli (strain K12)).